The following is a 248-amino-acid chain: Putative TrmH family tRNA/rRNA methyltransferase (248 aa).

S-adenosyl-L-methionine-binding residues include glycine 196, isoleucine 216, and leucine 225.

Belongs to the class IV-like SAM-binding methyltransferase superfamily. RNA methyltransferase TrmH family.

This is Putative TrmH family tRNA/rRNA methyltransferase from Staphylococcus aureus (strain COL).